A 250-amino-acid chain; its full sequence is MAEQTLSFVDCLMSRFPTVRVSVAQPRGEISLDVPVVEWCAVCKALRDEFDFEQLSDLCGVDYLGYGNAEWDTTDVSAQGFSRGVAGKAVGRFAWGEFPSAGSNDGTQPWDVPQERFAVLAHLISYRHNRRLRVRCFASNDALPIVASLTDVWPGVNWFEREAFDLFGIVFEGHPDLRRILTDYGFIGHPFRKDFPLTGNVEVRYDEEKKRVVYVPVTSVEPRVSVPRVIRDDPRFGAAAGESTHSETVK.

Belongs to the complex I 30 kDa subunit family. In terms of assembly, NDH-1 is composed of 14 different subunits. Subunits NuoB, C, D, E, F, and G constitute the peripheral sector of the complex.

The protein resides in the cell inner membrane. The enzyme catalyses a quinone + NADH + 5 H(+)(in) = a quinol + NAD(+) + 4 H(+)(out). Its function is as follows. NDH-1 shuttles electrons from NADH, via FMN and iron-sulfur (Fe-S) centers, to quinones in the respiratory chain. The immediate electron acceptor for the enzyme in this species is believed to be ubiquinone. Couples the redox reaction to proton translocation (for every two electrons transferred, four hydrogen ions are translocated across the cytoplasmic membrane), and thus conserves the redox energy in a proton gradient. This chain is NADH-quinone oxidoreductase subunit C, found in Xylella fastidiosa (strain M23).